The chain runs to 476 residues: Adenosylhomocysteinase (476 aa).

Residues T65, D140, and E201 each coordinate substrate. 202 to 204 (TTT) is a binding site for NAD(+). 2 residues coordinate substrate: K231 and D235. NAD(+) contacts are provided by residues N236, 265-270 (GYGDVG), E288, N323, 344-346 (IGH), and N392.

It belongs to the adenosylhomocysteinase family. The cofactor is NAD(+).

Its subcellular location is the cytoplasm. It carries out the reaction S-adenosyl-L-homocysteine + H2O = L-homocysteine + adenosine. Its pathway is amino-acid biosynthesis; L-homocysteine biosynthesis; L-homocysteine from S-adenosyl-L-homocysteine: step 1/1. Its function is as follows. May play a key role in the regulation of the intracellular concentration of adenosylhomocysteine. This chain is Adenosylhomocysteinase, found in Bacteroides thetaiotaomicron (strain ATCC 29148 / DSM 2079 / JCM 5827 / CCUG 10774 / NCTC 10582 / VPI-5482 / E50).